The primary structure comprises 601 residues: uncharacterized protein (601 aa).

The protein belongs to the chlamydial CPn_1016/CT_858/TC_0248 family.

This is an uncharacterized protein from Chlamydia muridarum (strain MoPn / Nigg).